We begin with the raw amino-acid sequence, 376 residues long: Serpin B6 (376 aa).

Met-1 bears the N-acetylmethionine mark. Ser-151 bears the Phosphoserine mark. An N6-acetyllysine modification is found at Lys-195.

Belongs to the serpin family. Ov-serpin subfamily. As to quaternary structure, forms a complex with the monomeric form of beta-tryptase.

It is found in the cytoplasm. Its function is as follows. Inhibitor of cathepsin G, kallikrein-8 and thrombin. May play an important role in the inner ear in the protection against leakage of lysosomal content during stress. May be involved in the regulation of serine proteinases present in the brain or extravasated from the blood. The protein is Serpin B6 (SERPINB6) of Macaca fascicularis (Crab-eating macaque).